Consider the following 369-residue polypeptide: RNA-binding protein rnp24 (369 aa).

Disordered stretches follow at residues M1–E77, T200–I219, and R304–D369. Residues W105–P206 enclose the RRM 1 domain. A compositionally biased stretch (polar residues) spans P209–I219. One can recognise an RRM 2 domain in the interval S228 to P310. The span at Q325 to S341 shows a compositional bias: basic and acidic residues. The segment covering A346–A357 has biased composition (low complexity).

The protein resides in the nucleus. The polypeptide is RNA-binding protein rnp24 (rnp24) (Schizosaccharomyces pombe (strain 972 / ATCC 24843) (Fission yeast)).